The sequence spans 266 residues: Protein PAE0875 (266 aa).

This sequence belongs to the CinA family.

This Pyrobaculum aerophilum (strain ATCC 51768 / DSM 7523 / JCM 9630 / CIP 104966 / NBRC 100827 / IM2) protein is Protein PAE0875.